The sequence spans 227 residues: WTAAANYVKIKVGTGKFARKTVVLSQKRTGTLKCATMEEIEAEKSLIEKSVKERMEKTIENVKASFNSIRTXRSNPDMLDKIKVEYYGTPTSLKSIAQISTPDSSSLLVNPYDKSSLKDIEKAIVNSDLGITPNNDGDVIRLSIPQLTADRRKELSKIVAKQAEEGKVALRNIRRDAIKSYDKLEKEKKLSEDNVKDLSSDLQKVIDEYIKKVDSIFKQKEKELMTV.

Residues 1–34 constitute a chloroplast transit peptide; the sequence is WTAAANYVKIKVGTGKFARKTVVLSQKRTGTLKC. A coiled-coil region spans residues 167 to 212; that stretch reads KVALRNIRRDAIKSYDKLEKEKKLSEDNVKDLSSDLQKVIDEYIKK.

It belongs to the RRF family.

It localises to the plastid. The protein resides in the chloroplast. Its function is as follows. Responsible for the release of ribosomes from messenger RNA at the termination of chloroplastic protein biosynthesis. The polypeptide is Ribosome-recycling factor, chloroplastic (RRF) (Daucus carota (Wild carrot)).